The chain runs to 177 residues: ATP-dependent protease subunit HslV (177 aa).

The active site involves T2. G158, C161, and T164 together coordinate Na(+).

This sequence belongs to the peptidase T1B family. HslV subfamily. In terms of assembly, a double ring-shaped homohexamer of HslV is capped on each side by a ring-shaped HslU homohexamer. The assembly of the HslU/HslV complex is dependent on binding of ATP.

It localises to the cytoplasm. The catalysed reaction is ATP-dependent cleavage of peptide bonds with broad specificity.. With respect to regulation, allosterically activated by HslU binding. In terms of biological role, protease subunit of a proteasome-like degradation complex believed to be a general protein degrading machinery. This is ATP-dependent protease subunit HslV from Pseudomonas aeruginosa (strain LESB58).